The primary structure comprises 173 residues: MKRPEKEAVVAQLTEEFRNADAVYLTEYRGLTVPQISDLREKLGRDTSYTVAKNTLARIAAKEAGIEGLDEILSGPTAITFVKGDFIEAAKVIRDFAKDNKALVIKGAAADGTVYDAEGAKKLADLKSRPQLLAEFAGDIKASMAKAAYLFNALPTKAVRTIDALREKQEKAA.

The protein belongs to the universal ribosomal protein uL10 family. In terms of assembly, part of the ribosomal stalk of the 50S ribosomal subunit. The N-terminus interacts with L11 and the large rRNA to form the base of the stalk. The C-terminus forms an elongated spine to which L12 dimers bind in a sequential fashion forming a multimeric L10(L12)X complex.

Its function is as follows. Forms part of the ribosomal stalk, playing a central role in the interaction of the ribosome with GTP-bound translation factors. In Bifidobacterium longum (strain DJO10A), this protein is Large ribosomal subunit protein uL10.